The primary structure comprises 452 residues: Gastrin/cholecystokinin type B receptor (452 aa).

The disordered stretch occupies residues 1–21 (MELLKLNRSVQGPGPGSGSSL). Residues 1–57 (MELLKLNRSVQGPGPGSGSSLCRPGVSLLNSSSAGNLSCDPPRIRGTGTRELEMAIR) lie on the Extracellular side of the membrane. N-linked (GlcNAc...) asparagine glycans are attached at residues N7, N30, and N36. Residues 58–79 (ITLYAVIFLMSVGGNVLIIVVL) traverse the membrane as a helical segment. Over 80–87 (GLSRRLRT) the chain is Cytoplasmic. Residues 88 to 109 (VTNAFLLSLAVSDLLLAVACMP) traverse the membrane as a helical segment. At 110–131 (FTLLPNLMGTFIFGTVICKAIS) the chain is on the extracellular side. Residues C127 and C205 are joined by a disulfide bond. The chain crosses the membrane as a helical span at residues 132 to 150 (YLMGVSVSVSTLNLVAIAL). Residues 151-170 (ERYSAICRPLQARVWQTRSH) are Cytoplasmic-facing. A helical transmembrane segment spans residues 171-189 (AARVILATWLLSGLLMVPY). Residues 190–219 (PVYTMVQPVGPRVLQCMHRWPSARVQQTWS) lie on the Extracellular side of the membrane. The helical transmembrane segment at 220–242 (VLLLLLLFFIPGVVIAVAYGLIS) threads the bilayer. Residues 243-338 (RELYLGLHFD…KLLAKKRVVR (96 aa)) lie on the Cytoplasmic side of the membrane. A disordered region spans residues 257-286 (SETQSRARNQGGLPGGAAPGPVHQNGGCRP). Residues 339-360 (MLLVIVLLFFLCWLPVYSVNTW) traverse the membrane as a helical segment. Residues 361 to 378 (RAFDGPGAQRALSGAPIS) are Extracellular-facing. Residues 379-399 (FIHLLSYVSACVNPLVYCFMH) form a helical membrane-spanning segment. The Cytoplasmic portion of the chain corresponds to 400–452 (RRFRQACLDTCARCCPRPPRARPQPLPDEDPPTPSIASLSRLSYTTISTLGPG). C413 carries the S-palmitoyl cysteine lipid modification. The disordered stretch occupies residues 421-452 (RPQPLPDEDPPTPSIASLSRLSYTTISTLGPG). Positions 434 to 452 (SIASLSRLSYTTISTLGPG) are enriched in polar residues.

This sequence belongs to the G-protein coupled receptor 1 family. As to expression, parietal cells, pancreas, brain and various neoplastic tissues.

It localises to the cell membrane. Its function is as follows. Receptor for gastrin and cholecystokinin. The CCK-B receptors occur throughout the central nervous system where they modulate anxiety, analgesia, arousal, and neuroleptic activity. This receptor mediates its action by association with G proteins that activate a phosphatidylinositol-calcium second messenger system. In Rattus norvegicus (Rat), this protein is Gastrin/cholecystokinin type B receptor (Cckbr).